The chain runs to 360 residues: Iron uptake protein A1 (360 aa).

The first 28 residues, 1 to 28 (MVQKLSRRLFLSIGTAFTVVVGSQLLSS), serve as a signal peptide directing secretion. The N-palmitoyl cysteine moiety is linked to residue Cys-29. Cys-29 carries the S-diacylglycerol cysteine lipid modification. His-54, Tyr-55, Tyr-185, Tyr-241, and Tyr-242 together coordinate Fe cation.

The protein belongs to the bacterial solute-binding protein 1 family.

The protein resides in the cellular thylakoid membrane. The protein localises to the cell membrane. Plays an important role in protecting the acceptor side of photosystem II (PSII) against oxidative damage, especially under iron-limiting growth conditions. The differing subcellular locations of futA1 (predominantly thylakoid lumen) and futA2 (predominantly periplasmic) suggest they may fulfill different roles. Its function is as follows. A major iron-binding protein involved in Fe(3+) uptake, probably part of a periplasmic ABC transporter complex futA1A2BC (TC 3.A.1.10.2) involved in Fe(3+) ion import (ferric iron). This protein and futA2 (slr0531) may be subunit proteins that have redundant or overlapping substrate-binding functions. This chain is Iron uptake protein A1 (futA1), found in Synechocystis sp. (strain ATCC 27184 / PCC 6803 / Kazusa).